Here is a 374-residue protein sequence, read N- to C-terminus: N-acetyldiaminopimelate deacetylase (374 aa).

Asp69 is a catalytic residue. Glu128 functions as the Proton acceptor in the catalytic mechanism.

The protein belongs to the peptidase M20A family. N-acetyldiaminopimelate deacetylase subfamily.

It carries out the reaction N-acetyl-(2S,6S)-2,6-diaminopimelate + H2O = (2S,6S)-2,6-diaminopimelate + acetate. The protein operates within amino-acid biosynthesis; L-lysine biosynthesis via DAP pathway; LL-2,6-diaminopimelate from (S)-tetrahydrodipicolinate (acetylase route): step 3/3. Functionally, catalyzes the conversion of N-acetyl-diaminopimelate to diaminopimelate and acetate. This chain is N-acetyldiaminopimelate deacetylase, found in Bacillus velezensis (strain DSM 23117 / BGSC 10A6 / LMG 26770 / FZB42) (Bacillus amyloliquefaciens subsp. plantarum).